A 593-amino-acid polypeptide reads, in one-letter code: Mitoguardin 2 (593 aa).

Transmembrane regions (helical) follow at residues 11-31 and 42-62; these read MIQA…TTFG and PGLR…ALAA. Disordered regions lie at residues 103–141 and 196–231; these read GYSS…VASM and SVGQ…SQRK. Low complexity-rich tracts occupy residues 106–116 and 123–141; these read SRRVQSPSSKS and ISSI…VASM. S132 is subject to Phosphoserine. Phosphothreonine is present on T206. Phosphoserine is present on residues S220, S224, and S228. Phosphothreonine is present on T273. Phosphoserine occurs at positions 276 and 295. The FFAT signature appears at 292-298; it reads SFFSATE.

Belongs to the mitoguardin family. As to quaternary structure, homodimer and heterodimer; forms heterodimers with MIGA1. Interacts with PLD6/MitoPLD. Interacts (via phosphorylated FFAT motif) with MOSPD2, VAPA and VAPB. Phosphorylation at Ser-295 of the FFAT motif activates interaction with MOSPD2, VAPA and VAPB.

The protein localises to the mitochondrion outer membrane. Its function is as follows. Regulator of mitochondrial fusion: acts by forming homo- and heterodimers at the mitochondrial outer membrane and facilitating the formation of PLD6/MitoPLD dimers. May act by regulating phospholipid metabolism via PLD6/MitoPLD. This is Mitoguardin 2 from Homo sapiens (Human).